We begin with the raw amino-acid sequence, 219 residues long: PKHD-type hydroxylase Mmar10_1675 (219 aa).

One can recognise a Fe2OG dioxygenase domain in the interval 77–171 (TLSRILVSRY…RVAVVGWVRS (95 aa)). His-95, Asp-97, and His-152 together coordinate Fe cation. Arg-162 is a 2-oxoglutarate binding site.

Requires Fe(2+) as cofactor. It depends on L-ascorbate as a cofactor.

The protein is PKHD-type hydroxylase Mmar10_1675 of Maricaulis maris (strain MCS10) (Caulobacter maris).